The sequence spans 154 residues: 3-hydroxyacyl-[acyl-carrier-protein] dehydratase FabZ (154 aa).

His-57 is an active-site residue.

The protein belongs to the thioester dehydratase family. FabZ subfamily.

Its subcellular location is the cytoplasm. The enzyme catalyses a (3R)-hydroxyacyl-[ACP] = a (2E)-enoyl-[ACP] + H2O. In terms of biological role, involved in unsaturated fatty acids biosynthesis. Catalyzes the dehydration of short chain beta-hydroxyacyl-ACPs and long chain saturated and unsaturated beta-hydroxyacyl-ACPs. In Sinorhizobium medicae (strain WSM419) (Ensifer medicae), this protein is 3-hydroxyacyl-[acyl-carrier-protein] dehydratase FabZ.